Reading from the N-terminus, the 316-residue chain is Transcription initiation factor IIB (316 aa).

A TFIIB-type zinc finger spans residues 11–42; it reads PKVTCPNHPDALLVEDYRAGDMICSECGLVVG. Cysteine 15, histidine 18, cysteine 34, and cysteine 37 together coordinate Zn(2+). Tandem repeats lie at residues 124-200 and 218-294.

The protein belongs to the TFIIB family.

It is found in the nucleus. It localises to the chromosome. It carries out the reaction L-lysyl-[protein] + acetyl-CoA = N(6)-acetyl-L-lysyl-[protein] + CoA + H(+). Its function is as follows. General transcription factor that plays a role in transcription initiation by RNA polymerase II (Pol II). Involved in the pre-initiation complex (PIC) formation and Pol II recruitment at promoter DNA. Together with the TATA box-bound TBP forms the core initiation complex and provides a bridge between TBP and the Pol II-TFIIF complex. Released from the PIC early following the onset of transcription during the initiation and elongation transition and reassociates with TBP during the next transcription cycle. Associates with chromatin to core promoter-specific regions. Binds to two distinct DNA core promoter consensus sequence elements in a TBP-independent manner; these IIB-recognition elements (BREs) are localized immediately upstream (BREu), 5'-[GC][GC][GA]CGCC-3', and downstream (BREd), 5'-[GA]T[TGA][TG][GT][TG][TG]-3', of the TATA box element. Modulates transcription start site selection. Also exhibits autoacetyltransferase activity that contributes to the activated transcription. The sequence is that of Transcription initiation factor IIB from Xenopus laevis (African clawed frog).